The chain runs to 754 residues: 5-methyltetrahydropteroyltriglutamate--homocysteine methyltransferase (754 aa).

5-methyltetrahydropteroyltri-L-glutamate-binding positions include arginine 17–lysine 20 and lysine 117. Residues isoleucine 431–serine 433 and glutamate 484 each bind L-homocysteine. L-methionine is bound by residues isoleucine 431–serine 433 and glutamate 484. Residues arginine 515–cysteine 516 and tryptophan 561 each bind 5-methyltetrahydropteroyltri-L-glutamate. Residue aspartate 599 participates in L-homocysteine binding. Aspartate 599 provides a ligand contact to L-methionine. Residue glutamate 605 coordinates 5-methyltetrahydropteroyltri-L-glutamate. 3 residues coordinate Zn(2+): histidine 641, cysteine 643, and glutamate 665. Histidine 694 functions as the Proton donor in the catalytic mechanism. Cysteine 726 serves as a coordination point for Zn(2+).

It belongs to the vitamin-B12 independent methionine synthase family. Zn(2+) is required as a cofactor.

The catalysed reaction is 5-methyltetrahydropteroyltri-L-glutamate + L-homocysteine = tetrahydropteroyltri-L-glutamate + L-methionine. It participates in amino-acid biosynthesis; L-methionine biosynthesis via de novo pathway; L-methionine from L-homocysteine (MetE route): step 1/1. In terms of biological role, catalyzes the transfer of a methyl group from 5-methyltetrahydrofolate to homocysteine resulting in methionine formation. The sequence is that of 5-methyltetrahydropteroyltriglutamate--homocysteine methyltransferase from Salmonella enteritidis PT4 (strain P125109).